The sequence spans 159 residues: Endoribonuclease YbeY (159 aa).

Residues H125, H129, and H135 each contribute to the Zn(2+) site.

Belongs to the endoribonuclease YbeY family. The cofactor is Zn(2+).

Its subcellular location is the cytoplasm. In terms of biological role, single strand-specific metallo-endoribonuclease involved in late-stage 70S ribosome quality control and in maturation of the 3' terminus of the 16S rRNA. In Enterococcus faecalis (strain ATCC 700802 / V583), this protein is Endoribonuclease YbeY.